Here is a 152-residue protein sequence, read N- to C-terminus: Ribosome maturation factor RimP (152 aa).

This sequence belongs to the RimP family.

The protein resides in the cytoplasm. Its function is as follows. Required for maturation of 30S ribosomal subunits. The chain is Ribosome maturation factor RimP from Aeromonas salmonicida (strain A449).